The sequence spans 306 residues: Glutaminase (306 aa).

Substrate contacts are provided by S64, N115, E159, N166, Y190, Y242, and V260.

This sequence belongs to the glutaminase family. In terms of assembly, homotetramer.

The enzyme catalyses L-glutamine + H2O = L-glutamate + NH4(+). This is Glutaminase from Vibrio cholerae serotype O1 (strain ATCC 39541 / Classical Ogawa 395 / O395).